A 199-amino-acid polypeptide reads, in one-letter code: MKIKNPRFVISAYDFDDFPTHNWPEFAFSGRSNVGKSSLINTLVNRRKLARTSSRPGRTQSINFFNIDDRFYLVDLPGYGFANVPRKVKEEWGRLIEGYLNNRPNLAGIVQIVDARHKPTRDDLMMVDWIKASGIPCLIAATKVDKISRGSRKKQEELIKKTLVLEDFDGQFTFFSAKTGEGKKQVGKFILDLVDSFKG.

Residues 22-196 (NWPEFAFSGR…GKFILDLVDS (175 aa)) form the EngB-type G domain. GTP contacts are provided by residues 30 to 37 (GRSNVGKS), 57 to 61 (GRTQS), 75 to 78 (DLPG), 142 to 145 (TKVD), and 175 to 177 (FSA). Mg(2+) contacts are provided by S37 and T59.

Belongs to the TRAFAC class TrmE-Era-EngA-EngB-Septin-like GTPase superfamily. EngB GTPase family. The cofactor is Mg(2+).

In terms of biological role, necessary for normal cell division and for the maintenance of normal septation. This Halothermothrix orenii (strain H 168 / OCM 544 / DSM 9562) protein is Probable GTP-binding protein EngB.